We begin with the raw amino-acid sequence, 507 residues long: RNA-splicing ligase RtcB homolog (507 aa).

Mn(2+) is bound by residues D121, C124, H229, H261, and H355. 228–232 (NHYGE) contributes to the GMP binding site. Residues 355–356 (HN), 404–407 (GGTM), S411, 430–433 (HGSG), and K506 each bind GMP. Catalysis depends on H430, which acts as the GMP-histidine intermediate.

It belongs to the RtcB family. Catalytic component of the tRNA-splicing ligase complex. Mn(2+) is required as a cofactor.

It catalyses the reaction a 3'-end 3'-phospho-ribonucleotide-RNA + a 5'-end dephospho-ribonucleoside-RNA + GTP = a ribonucleotidyl-ribonucleotide-RNA + GMP + diphosphate. The catalysed reaction is a 3'-end 2',3'-cyclophospho-ribonucleotide-RNA + a 5'-end dephospho-ribonucleoside-RNA + GTP + H2O = a ribonucleotidyl-ribonucleotide-RNA + GMP + diphosphate + H(+). Functionally, catalytic subunit of the tRNA-splicing ligase complex that acts by directly joining spliced tRNA halves to mature-sized tRNAs by incorporating the precursor-derived splice junction phosphate into the mature tRNA as a canonical 3',5'-phosphodiester. May act as an RNA ligase with broad substrate specificity, and may function toward other RNAs. The chain is RNA-splicing ligase RtcB homolog from Theileria parva (East coast fever infection agent).